The sequence spans 159 residues: Lipoprotein signal peptidase (159 aa).

3 helical membrane-spanning segments follow: residues 4–24 (PYFV…DQVT), 64–84 (MSFF…FYIK), and 88–108 (GNFL…GNFI). Active-site residues include D118 and D136. A helical transmembrane segment spans residues 131–151 (IFNGADSSLTIGVILVLIALL).

Belongs to the peptidase A8 family.

It localises to the cell membrane. The catalysed reaction is Release of signal peptides from bacterial membrane prolipoproteins. Hydrolyzes -Xaa-Yaa-Zaa-|-(S,diacylglyceryl)Cys-, in which Xaa is hydrophobic (preferably Leu), and Yaa (Ala or Ser) and Zaa (Gly or Ala) have small, neutral side chains.. Its pathway is protein modification; lipoprotein biosynthesis (signal peptide cleavage). This protein specifically catalyzes the removal of signal peptides from prolipoproteins. The protein is Lipoprotein signal peptidase of Staphylococcus carnosus (strain TM300).